The sequence spans 504 residues: Cobyric acid synthase (504 aa).

The GATase cobBQ-type domain maps to E258–W454. C339 functions as the Nucleophile in the catalytic mechanism. The active site involves H446.

Belongs to the CobB/CobQ family. CobQ subfamily.

It functions in the pathway cofactor biosynthesis; adenosylcobalamin biosynthesis. Catalyzes amidations at positions B, D, E, and G on adenosylcobyrinic A,C-diamide. NH(2) groups are provided by glutamine, and one molecule of ATP is hydrogenolyzed for each amidation. This Prochlorococcus marinus (strain NATL2A) protein is Cobyric acid synthase.